The chain runs to 109 residues: Glutaredoxin-C13 (109 aa).

The 107-residue stretch at 2-108 folds into the Glutaredoxin domain; the sequence is AEMVARLASE…PMLKNAGALW (107 aa). Cysteines 22 and 25 form a disulfide. The Responsive for interaction with TGA factors signature appears at 106-109; it reads ALWL.

The protein belongs to the glutaredoxin family. CC-type subfamily.

It is found in the cytoplasm. It localises to the nucleus. Has a glutathione-disulfide oxidoreductase activity in the presence of NADPH and glutathione reductase. Reduces low molecular weight disulfides and proteins. This Oryza sativa subsp. japonica (Rice) protein is Glutaredoxin-C13 (GRXC13).